The primary structure comprises 440 residues: DNA polymerase delta small subunit (440 aa).

It belongs to the DNA polymerase delta/II small subunit family. In terms of assembly, heterodimer with subunits of 125 kDa and 50 kDa.

It localises to the nucleus. It carries out the reaction DNA(n) + a 2'-deoxyribonucleoside 5'-triphosphate = DNA(n+1) + diphosphate. The function of the small subunit is not yet clear. This Arabidopsis thaliana (Mouse-ear cress) protein is DNA polymerase delta small subunit (POLD2).